Here is a 91-residue protein sequence, read N- to C-terminus: Small ribosomal subunit protein uS17 (91 aa).

This sequence belongs to the universal ribosomal protein uS17 family. In terms of assembly, part of the 30S ribosomal subunit.

Functionally, one of the primary rRNA binding proteins, it binds specifically to the 5'-end of 16S ribosomal RNA. This Thermobifida fusca (strain YX) protein is Small ribosomal subunit protein uS17.